Here is a 457-residue protein sequence, read N- to C-terminus: Phosphoglucosamine mutase (457 aa).

Residue S109 is the Phosphoserine intermediate of the active site. S109, D251, D253, and D255 together coordinate Mg(2+). S109 bears the Phosphoserine mark.

This sequence belongs to the phosphohexose mutase family. Requires Mg(2+) as cofactor. Post-translationally, activated by phosphorylation.

The enzyme catalyses alpha-D-glucosamine 1-phosphate = D-glucosamine 6-phosphate. Functionally, catalyzes the conversion of glucosamine-6-phosphate to glucosamine-1-phosphate. The protein is Phosphoglucosamine mutase of Bdellovibrio bacteriovorus (strain ATCC 15356 / DSM 50701 / NCIMB 9529 / HD100).